Reading from the N-terminus, the 1020-residue chain is MFGFLKKIFGSAHDRLLNRYRKQVEEVNKWDQKFQSLSDEQLKAKTAEFRLRLKNGEMLDQLLPEAYAVVKAVCRRLNGTEIHVSGYNQRWDMVPYDVQVLGGIAMHNGAIAEMHTGEGKTLTAVMPLYLNALTGKPVHLITVNDYLAQRDCEWVGTVLRWLGLTTGALTNSVAIEKRKEIYESDVVYGTASEFGFDYLRDNSMAMSKEDQVQRGYYFAIIDEVDSILIDEARTPLIISGPVPDSRQMYDELKEGVAELVRRQRDLCNRLASDARKVVEEVEALGSGKKDKKLEESEQEAYRKLWLVGKGTPQNKILKRLKENPDIRAAIDKWDLYYHAEQNKEERTQTLAELYMIIDEKGNEYELTDKGINAWQTYTNGIGSPEDFIMMDIGDEYIKVDEDLSLDAESKMARKMQIKEEDAKRKERAHNLRQLLRAHLLMEKDVDYIIHDNKIVIIDENTGRPQPGRRFSDGLHQAIEAKEGVEIQKETQTYATITLQNFFRMYEKLSGMTGTATTEANEFKEIYKLDVLEIPTHRANRRVDFNDEIYMTEREKYNAILKEVREVHEKERPILIGTESVEVSEKLSRIFKQNGLEHTVLNAKQNEREAEIIAEAGKRAAITIATNMAGRGTDIKLEPGVADLGGLYVMGTTRHQSRRTDRQLRGRCARQGDPGNSKFYISFEDALLRLFASPRITSVLQKFRPPEGEPISAGMLNKSIETAQKRVEQRNYTMRKHTLEYDDVMNKQRQEIYAFRNEILGVGNIEPVAIEIIESVCSMGADQFFKSRSEEGGWNPEGYRQWLLHLFPVTFDEYFFDKEHLEIEEIEQMAADKVVEALKEKIASENAKVPGHLIAMGESPFPAHTAIRNLMIRKTDQMWQEHLLRMDHLRSDVTLRAVGQRDPLTEFKHEAFALFDELSRNLRTEVARSMFRFEIIAPQQTLEQLLQSGLRLETNRSLFVDLQNEQPSQEMAADEETQEESKIEENKPEPIVVGPRVGRNDLCPCGSGKKFKKCCNKVEIV.

ATP is bound by residues Gln99, 117-121 (GEGKT), and Asp633. Residues 963–992 (NEQPSQEMAADEETQEESKIEENKPEPIVV) are disordered. Residues 978 to 987 (EESKIEENKP) show a composition bias toward basic and acidic residues. Zn(2+)-binding residues include Cys1002, Cys1004, Cys1013, and Cys1014.

This sequence belongs to the SecA family. In terms of assembly, monomer and homodimer. Part of the essential Sec protein translocation apparatus which comprises SecA, SecYEG and auxiliary proteins SecDF. Other proteins may also be involved. Requires Zn(2+) as cofactor.

It localises to the cell inner membrane. The protein localises to the cytoplasm. The catalysed reaction is ATP + H2O + cellular proteinSide 1 = ADP + phosphate + cellular proteinSide 2.. Part of the Sec protein translocase complex. Interacts with the SecYEG preprotein conducting channel. Has a central role in coupling the hydrolysis of ATP to the transfer of proteins into and across the cell membrane, serving as an ATP-driven molecular motor driving the stepwise translocation of polypeptide chains across the membrane. The polypeptide is Protein translocase subunit SecA (Protochlamydia amoebophila (strain UWE25)).